Consider the following 239-residue polypeptide: Ribonuclease PH (239 aa).

Phosphate-binding positions include Arg86 and 124–126; that span reads GTR.

The protein belongs to the RNase PH family. As to quaternary structure, homohexameric ring arranged as a trimer of dimers.

It catalyses the reaction tRNA(n+1) + phosphate = tRNA(n) + a ribonucleoside 5'-diphosphate. In terms of biological role, phosphorolytic 3'-5' exoribonuclease that plays an important role in tRNA 3'-end maturation. Removes nucleotide residues following the 3'-CCA terminus of tRNAs; can also add nucleotides to the ends of RNA molecules by using nucleoside diphosphates as substrates, but this may not be physiologically important. Probably plays a role in initiation of 16S rRNA degradation (leading to ribosome degradation) during starvation. The protein is Ribonuclease PH of Anaeromyxobacter dehalogenans (strain 2CP-C).